Here is a 446-residue protein sequence, read N- to C-terminus: Glutamyl-tRNA reductase (446 aa).

Substrate-binding positions include 49–52, Ser-109, 114–116, and Gln-120; these read TCNR and ETQ. Residue Cys-50 is the Nucleophile of the active site. 189–194 contacts NADP(+); it reads GAGEMA.

This sequence belongs to the glutamyl-tRNA reductase family. In terms of assembly, homodimer.

It carries out the reaction (S)-4-amino-5-oxopentanoate + tRNA(Glu) + NADP(+) = L-glutamyl-tRNA(Glu) + NADPH + H(+). Its pathway is porphyrin-containing compound metabolism; protoporphyrin-IX biosynthesis; 5-aminolevulinate from L-glutamyl-tRNA(Glu): step 1/2. In terms of biological role, catalyzes the NADPH-dependent reduction of glutamyl-tRNA(Glu) to glutamate 1-semialdehyde (GSA). The chain is Glutamyl-tRNA reductase from Macrococcus caseolyticus (strain JCSC5402) (Macrococcoides caseolyticum).